The chain runs to 191 residues: Ribosome maturation factor RimM (191 aa).

The PRC barrel domain occupies 114-191 (EDEYYWVDLI…RIVVDWQPDY (78 aa)).

This sequence belongs to the RimM family. Binds ribosomal protein uS19.

The protein localises to the cytoplasm. Its function is as follows. An accessory protein needed during the final step in the assembly of 30S ribosomal subunit, possibly for assembly of the head region. Essential for efficient processing of 16S rRNA. May be needed both before and after RbfA during the maturation of 16S rRNA. It has affinity for free ribosomal 30S subunits but not for 70S ribosomes. In Paracidovorax citrulli (strain AAC00-1) (Acidovorax citrulli), this protein is Ribosome maturation factor RimM.